The sequence spans 754 residues: 5-methyltetrahydropteroyltriglutamate--homocysteine methyltransferase (754 aa).

Residues 19-22 (RELK) and K121 contribute to the 5-methyltetrahydropteroyltri-L-glutamate site. Residues 423 to 425 (IGS) and E476 each bind L-homocysteine. L-methionine-binding positions include 423–425 (IGS) and E476. 5-methyltetrahydropteroyltri-L-glutamate is bound by residues 507-508 (RC) and W553. Residue D591 participates in L-homocysteine binding. D591 serves as a coordination point for L-methionine. E597 is a 5-methyltetrahydropteroyltri-L-glutamate binding site. Residues H633, C635, and E657 each coordinate Zn(2+). H686 (proton donor) is an active-site residue. A Zn(2+)-binding site is contributed by C718.

It belongs to the vitamin-B12 independent methionine synthase family. Zn(2+) is required as a cofactor.

It carries out the reaction 5-methyltetrahydropteroyltri-L-glutamate + L-homocysteine = tetrahydropteroyltri-L-glutamate + L-methionine. The protein operates within amino-acid biosynthesis; L-methionine biosynthesis via de novo pathway; L-methionine from L-homocysteine (MetE route): step 1/1. In terms of biological role, catalyzes the transfer of a methyl group from 5-methyltetrahydrofolate to homocysteine resulting in methionine formation. The sequence is that of 5-methyltetrahydropteroyltriglutamate--homocysteine methyltransferase from Corynebacterium efficiens (strain DSM 44549 / YS-314 / AJ 12310 / JCM 11189 / NBRC 100395).